The chain runs to 321 residues: Protoheme IX farnesyltransferase (321 aa).

A run of 10 helical transmembrane segments spans residues 28 to 48, 49 to 69, 94 to 114, 116 to 136, 149 to 169, 176 to 196, 222 to 242, 247 to 267, 277 to 297, and 300 to 320; these read VMSLVIFTALAGMLIAPDPVH, PIVGFASLLAIAVGAGASGAL, VMPNEALAFGLTLSFLSVFTL, IVANWLAAGFLAFTIFFYVVI, IVIGGAAGAFPPMVGYAAATG, FILFAIIFIWTPPHFWALALG, ILLYTLLLAPLGVAPWLLGFA, GMLSIALGAAMLFFAARVYIV, AKALFGFSILYLFLLFAEIVV, and LVPIVVAMGAWLTSGMFPGFF.

Belongs to the UbiA prenyltransferase family. Protoheme IX farnesyltransferase subfamily.

The protein resides in the cell inner membrane. It catalyses the reaction heme b + (2E,6E)-farnesyl diphosphate + H2O = Fe(II)-heme o + diphosphate. It functions in the pathway porphyrin-containing compound metabolism; heme O biosynthesis; heme O from protoheme: step 1/1. Functionally, converts heme B (protoheme IX) to heme O by substitution of the vinyl group on carbon 2 of heme B porphyrin ring with a hydroxyethyl farnesyl side group. The polypeptide is Protoheme IX farnesyltransferase (Beijerinckia indica subsp. indica (strain ATCC 9039 / DSM 1715 / NCIMB 8712)).